The chain runs to 410 residues: Peptidase T (410 aa).

Residue histidine 78 participates in Zn(2+) binding. Aspartate 80 is a catalytic residue. Residue aspartate 140 coordinates Zn(2+). The active-site Proton acceptor is the glutamate 174. 3 residues coordinate Zn(2+): glutamate 175, aspartate 197, and histidine 379.

The protein belongs to the peptidase M20B family. Zn(2+) serves as cofactor.

Its subcellular location is the cytoplasm. It catalyses the reaction Release of the N-terminal residue from a tripeptide.. Functionally, cleaves the N-terminal amino acid of tripeptides. In Staphylococcus saprophyticus subsp. saprophyticus (strain ATCC 15305 / DSM 20229 / NCIMB 8711 / NCTC 7292 / S-41), this protein is Peptidase T.